The sequence spans 384 residues: MAKHLFTSESVSEGHPDKIADQISDAVLDAILEQDPKARVACETYVKTGMVLVGGEITTSAWVDIEEITRNTVREIGYVHSDMGFDANSCAVLSAIGKQSPDINQGVDRADPLEQGAGDQGLMFGYATNETDVLMPAPVTYAHRLVQRQAEVRKNGTLPWLRPDAKSQVTFQYDDGKIVGIDAVVLSTQHAEDIDQKSLQEAVMEEIIKPILPTEWLNASTKFFINPTGRFVIGGPMGDCGLTGRKIIVDTYGGMARHGGGAFSGKDPSKVDRSAAYAARYVAKNIVAAGLADRCEIQVSYAIGVAEPTSIMVETFGTEKVPSEQLTLLVREFFDLRPYGLIQMLDLLHPIYKETAAYGHFGREHFPWEKTDKAALLREAAGLK.

Residue histidine 15 participates in ATP binding. Aspartate 17 is a binding site for Mg(2+). Glutamate 43 is a binding site for K(+). L-methionine contacts are provided by glutamate 56 and glutamine 99. Residues glutamine 99–arginine 109 form a flexible loop region. ATP is bound by residues aspartate 164 to lysine 166, arginine 230 to phenylalanine 231, aspartate 239, arginine 245 to lysine 246, alanine 262, and lysine 266. Residue aspartate 239 coordinates L-methionine. Lysine 270 contributes to the L-methionine binding site.

Belongs to the AdoMet synthase family. Homotetramer; dimer of dimers. The cofactor is Mg(2+). K(+) serves as cofactor.

Its subcellular location is the cytoplasm. It catalyses the reaction L-methionine + ATP + H2O = S-adenosyl-L-methionine + phosphate + diphosphate. It participates in amino-acid biosynthesis; S-adenosyl-L-methionine biosynthesis; S-adenosyl-L-methionine from L-methionine: step 1/1. In terms of biological role, catalyzes the formation of S-adenosylmethionine (AdoMet) from methionine and ATP. The overall synthetic reaction is composed of two sequential steps, AdoMet formation and the subsequent tripolyphosphate hydrolysis which occurs prior to release of AdoMet from the enzyme. The sequence is that of S-adenosylmethionine synthase from Klebsiella pneumoniae subsp. pneumoniae (strain ATCC 700721 / MGH 78578).